The primary structure comprises 40 residues: Large ribosomal subunit protein bL36 (40 aa).

Belongs to the bacterial ribosomal protein bL36 family.

The chain is Large ribosomal subunit protein bL36 from Coxiella burnetii (strain Dugway 5J108-111).